The chain runs to 543 residues: CTP synthase (543 aa).

The tract at residues 1–265 (MTRFVFITGG…DQEVLRYFDL (265 aa)) is amidoligase domain. Position 13 (serine 13) interacts with CTP. Serine 13 provides a ligand contact to UTP. Residue 14–19 (SLGKGI) coordinates ATP. Position 54 (tyrosine 54) interacts with L-glutamine. Aspartate 71 is an ATP binding site. Residues aspartate 71 and glutamate 139 each contribute to the Mg(2+) site. Residues 146 to 148 (DIE), 186 to 191 (KTKPTQ), and lysine 222 contribute to the CTP site. UTP-binding positions include 186–191 (KTKPTQ) and lysine 222. The Glutamine amidotransferase type-1 domain maps to 291–542 (RVAIVGKYTA…IAAAVKEAHR (252 aa)). L-glutamine is bound at residue glycine 354. The active-site Nucleophile; for glutamine hydrolysis is the cysteine 381. L-glutamine is bound by residues 382-385 (FGMQ), glutamate 405, and arginine 470. Active-site residues include histidine 515 and glutamate 517.

It belongs to the CTP synthase family. In terms of assembly, homotetramer.

The enzyme catalyses UTP + L-glutamine + ATP + H2O = CTP + L-glutamate + ADP + phosphate + 2 H(+). The catalysed reaction is L-glutamine + H2O = L-glutamate + NH4(+). It carries out the reaction UTP + NH4(+) + ATP = CTP + ADP + phosphate + 2 H(+). It functions in the pathway pyrimidine metabolism; CTP biosynthesis via de novo pathway; CTP from UDP: step 2/2. Its activity is regulated as follows. Allosterically activated by GTP, when glutamine is the substrate; GTP has no effect on the reaction when ammonia is the substrate. The allosteric effector GTP functions by stabilizing the protein conformation that binds the tetrahedral intermediate(s) formed during glutamine hydrolysis. Inhibited by the product CTP, via allosteric rather than competitive inhibition. Its function is as follows. Catalyzes the ATP-dependent amination of UTP to CTP with either L-glutamine or ammonia as the source of nitrogen. Regulates intracellular CTP levels through interactions with the four ribonucleotide triphosphates. The protein is CTP synthase of Gluconobacter oxydans (strain 621H) (Gluconobacter suboxydans).